Consider the following 538-residue polypeptide: Chaperonin GroEL 1 (538 aa).

Residues 29 to 32 (TLGP), 86 to 90 (DGTTT), Gly413, 478 to 480 (NAA), and Asp494 contribute to the ATP site.

It belongs to the chaperonin (HSP60) family. Forms a cylinder of 14 subunits composed of two heptameric rings stacked back-to-back. Interacts with the co-chaperonin GroES.

It is found in the cytoplasm. It catalyses the reaction ATP + H2O + a folded polypeptide = ADP + phosphate + an unfolded polypeptide.. Its function is as follows. Together with its co-chaperonin GroES, plays an essential role in assisting protein folding. The GroEL-GroES system forms a nano-cage that allows encapsulation of the non-native substrate proteins and provides a physical environment optimized to promote and accelerate protein folding. The protein is Chaperonin GroEL 1 of Corynebacterium glutamicum (strain R).